Reading from the N-terminus, the 476-residue chain is Adenosylhomocysteinase (476 aa).

The substrate site is built by T67, D142, and E202. 203 to 205 (TTT) lines the NAD(+) pocket. 2 residues coordinate substrate: K232 and D236. Residues N237, 266–271 (GYGDVG), E289, N324, 345–347 (IGH), and N390 each bind NAD(+).

This sequence belongs to the adenosylhomocysteinase family. NAD(+) serves as cofactor.

It is found in the cytoplasm. The enzyme catalyses S-adenosyl-L-homocysteine + H2O = L-homocysteine + adenosine. The protein operates within amino-acid biosynthesis; L-homocysteine biosynthesis; L-homocysteine from S-adenosyl-L-homocysteine: step 1/1. May play a key role in the regulation of the intracellular concentration of adenosylhomocysteine. The protein is Adenosylhomocysteinase of Prochlorococcus marinus (strain MIT 9313).